Consider the following 139-residue polypeptide: Hydrogenase maturation factor HypA (139 aa).

Position 2 (H2) interacts with Ni(2+). 4 residues coordinate Zn(2+): C73, C76, C110, and C113.

It belongs to the HypA/HybF family.

In terms of biological role, involved in the maturation of [NiFe] hydrogenases. Required for nickel insertion into the metal center of the hydrogenase. This Thermococcus onnurineus (strain NA1) protein is Hydrogenase maturation factor HypA.